A 637-amino-acid chain; its full sequence is MEGGCGSQWKAAGLLFCVMVFASAERPVFTNHFLVELHKDGEEEARQVAAEHGFGVRKLPFAEGLYHFYHNGLAKAKRRRSLHHKRQLERDPRIKMALQQEGFDRKKRGYRDINEIDINMNDPLFTKQWYLFNTGQADGTPGLDLNVAEAWELGYTGKGVTIGIMDDGIDYLHPDLAYNYNSDASYDFSSNDPYPYPRYTDDWFNSHGTRCAGEVSAAASNNICGVGVAYNSKVAGIRMLDQPFMTDIIEASSISHMPQLIDIYSASWGPTDNGKTVDGPRELTLQAMADGVNKGRGGKGSIYVWASGDGGSYDDCNCDGYASSMWTISINSAINDGRTALYDESCSSTLASTFSNGRKRNPEAGVATTDLYGNCTLRHSGTSAAAPEAAGVFALALEANVDLTWRDMQHLTVLTSKRNQLHDEVHQWRRNGVGLEFNHLFGYGVLDAGAMVKMAKDWKTVPERFHCVGGSVQNPEKIPPTGKLVLTLQTNACEGKENFVRYLEHVQAVITVNATRRGDLNINMTSPMGTKSILLSRRPRDDDSKVGFDKWPFMTTHTWGEDARGTWTLELGFVGSAPQKGLLKEWTLMLHGTQSAPYIDQVVRDYQSKLAMSKKQELEEELDEAVERSLQSILRKN.

The N-terminal stretch at 1-24 is a signal peptide; it reads MEGGCGSQWKAAGLLFCVMVFASA. The propeptide occupies 25–108; the sequence is ERPVFTNHFL…QQEGFDRKKR (84 aa). The Peptidase S8 domain occupies 128–452; that stretch reads QWYLFNTGQA…YGVLDAGAMV (325 aa). Residues Asp-166 and His-207 each act as charge relay system in the active site. 2 disulfide bridges follow: Cys-224-Cys-375 and Cys-316-Cys-346. An N-linked (GlcNAc...) asparagine glycan is attached at Asn-374. Ser-383 serves as the catalytic Charge relay system. The region spanning 460–596 is the P/Homo B domain; that stretch reads TVPERFHCVG…TLMLHGTQSA (137 aa). A disulfide bridge connects residues Cys-467 and Cys-493. N-linked (GlcNAc...) asparagine glycans are attached at residues Asn-513 and Asn-523.

Belongs to the peptidase S8 family. Furin subfamily.

It localises to the cytoplasmic vesicle. The protein localises to the secretory vesicle. Its subcellular location is the secreted. The enzyme catalyses Release of protein hormones and neuropeptides from their precursors, generally by hydrolysis of -Lys-Arg-|- bonds.. Functionally, serine endopeptidase which is involved in the processing of hormone and other protein precursors at sites comprised of pairs of basic amino acid residues. Responsible for the release of glucagon from proglucagon in pancreatic A cells. In Rattus norvegicus (Rat), this protein is Neuroendocrine convertase 2 (Pcsk2).